Here is a 225-residue protein sequence, read N- to C-terminus: MYSIKTDHKLMPRERLIRLGPEKLSNQEQLAILLRTGNKEKHVLELSAYLLSSLDSLADLKKFSLQELQRLSGIGKVKAIEIKAMLELADRIQIAGQAVADPVLSSAQVAEKMMIELGDKQQEHLVAIYLDSQNKIIEEKTIFIGTVRKSIAEPREILYYACKNMATSLIVVHNHPSGLTKPSANDYHFTEKIKRSCDYLGLICLDHIIVSKYDYYSFREKSDLF.

Residues 102–224 enclose the MPN domain; sequence PVLSSAQVAE…YYSFREKSDL (123 aa). 3 residues coordinate Zn(2+): histidine 173, histidine 175, and aspartate 186. Residues 173 to 186 carry the JAMM motif motif; sequence HNHPSGLTKPSAND.

This sequence belongs to the UPF0758 family.

In Streptococcus equi subsp. equi (strain 4047), this protein is UPF0758 protein SEQ_1136.